A 938-amino-acid polypeptide reads, in one-letter code: Phosphoenolpyruvate carboxylase (938 aa).

Catalysis depends on residues H151 and K591.

Belongs to the PEPCase type 1 family. The cofactor is Mg(2+).

It catalyses the reaction oxaloacetate + phosphate = phosphoenolpyruvate + hydrogencarbonate. In terms of biological role, forms oxaloacetate, a four-carbon dicarboxylic acid source for the tricarboxylic acid cycle. The polypeptide is Phosphoenolpyruvate carboxylase (Roseiflexus castenholzii (strain DSM 13941 / HLO8)).